Reading from the N-terminus, the 536-residue chain is CTP synthase (536 aa).

Positions Met-1–Leu-267 are amidoligase domain. Residue Ser-13 coordinates CTP. Position 13 (Ser-13) interacts with UTP. ATP is bound at residue Ser-14 to Ile-19. Tyr-54 lines the L-glutamine pocket. Asp-71 lines the ATP pocket. 2 residues coordinate Mg(2+): Asp-71 and Glu-141. CTP contacts are provided by residues Asp-148–Glu-150, Lys-188–Gln-193, and Lys-224. UTP is bound by residues Lys-188 to Gln-193 and Lys-224. Arg-240–Ala-242 contacts ATP. The 243-residue stretch at Thr-293–Asn-535 folds into the Glutamine amidotransferase type-1 domain. Gly-355 is an L-glutamine binding site. Cys-382 acts as the Nucleophile; for glutamine hydrolysis in catalysis. Residues Leu-383 to Gln-386, Glu-406, and Arg-463 contribute to the L-glutamine site. Catalysis depends on residues His-508 and Glu-510.

The protein belongs to the CTP synthase family. In terms of assembly, homotetramer.

The enzyme catalyses UTP + L-glutamine + ATP + H2O = CTP + L-glutamate + ADP + phosphate + 2 H(+). The catalysed reaction is L-glutamine + H2O = L-glutamate + NH4(+). It catalyses the reaction UTP + NH4(+) + ATP = CTP + ADP + phosphate + 2 H(+). It participates in pyrimidine metabolism; CTP biosynthesis via de novo pathway; CTP from UDP: step 2/2. Its activity is regulated as follows. Allosterically activated by GTP, when glutamine is the substrate; GTP has no effect on the reaction when ammonia is the substrate. The allosteric effector GTP functions by stabilizing the protein conformation that binds the tetrahedral intermediate(s) formed during glutamine hydrolysis. Inhibited by the product CTP, via allosteric rather than competitive inhibition. Functionally, catalyzes the ATP-dependent amination of UTP to CTP with either L-glutamine or ammonia as the source of nitrogen. Regulates intracellular CTP levels through interactions with the four ribonucleotide triphosphates. This chain is CTP synthase, found in Staphylococcus aureus (strain NCTC 8325 / PS 47).